Consider the following 391-residue polypeptide: Matrix metalloproteinase-23 (391 aa).

At 1–19 (MGWRACLRPEASGAVQGRW) the chain is on the cytoplasmic side. Residues 1–79 (MGWRACLRPE…LSMLVTRRRR (79 aa)) constitute a propeptide that is removed on maturation. The chain crosses the membrane as a helical; Signal-anchor for type II membrane protein span at residues 20-38 (LGAVLSGLCLLSALAFLEW). Residues 39–391 (LGSPTETAWN…TYSWRVRVRS (353 aa)) are Lumenal-facing. N-linked (GlcNAc...) asparagine glycans are attached at residues N93 and N149. H212 is a Zn(2+) binding site. The active site involves E213. Zn(2+)-binding residues include H216 and H222. N233 is a glycosylation site (N-linked (GlcNAc...) asparagine). A ShKT domain is found at 256-290 (CLDRIFVCTSWARKGFCDVRQRLMKRLCPRSCDFC). 3 cysteine pairs are disulfide-bonded: C256/C290, C263/C283, and C272/C287. Residues 296–381 (PTVATTTSPT…VVRHRQRVLT (86 aa)) enclose the Ig-like C2-type domain. N317 carries N-linked (GlcNAc...) asparagine glycosylation. An intrachain disulfide couples C322 to C371.

This sequence belongs to the peptidase M10A family. It depends on Zn(2+) as a cofactor. In terms of processing, N-glycosylated. Proteolytic cleavage might yield an active form. As to expression, expressed at the highest levels in ovary and uterus. In ovary expression is strictly confined to granulosa cells of preantral and small antral follicles. Detected also in testis and prostate.

The protein localises to the membrane. It localises to the endoplasmic reticulum membrane. Its activity is regulated as follows. Inhibited by TIMP2. Its function is as follows. Protease. May regulate the surface expression of some potassium channels by retaining them in the endoplasmic reticulum. The polypeptide is Matrix metalloproteinase-23 (Mmp23) (Rattus norvegicus (Rat)).